The chain runs to 521 residues: BAR/IMD domain-containing adapter protein 2 (521 aa).

The IMD domain maps to 1–250; the sequence is MSLSRSEEMH…VQLMQQMGNS (250 aa). Residues 132 to 153 adopt a coiled-coil conformation; sequence DALDKCQAELKKLRKKSQGSKN. Phosphoserine occurs at positions 262, 324, 326, and 337. Residues 297–370 form a disordered region; that stretch reads APVMNGVSGP…TLPRSSSMAA (74 aa). Residues 321–333 show a composition bias toward low complexity; it reads QPKSTSPPQSQSK. Thr341 bears the Phosphothreonine mark. Ser347 is modified (phosphoserine). A compositionally biased stretch (polar residues) spans 353–368; that stretch reads SYATTENKTLPRSSSM. Residue Thr361 is modified to Phosphothreonine. Phosphoserine is present on residues Ser367, Ser385, Ser396, and Ser455. Positions 375-438 constitute an SH3 domain; sequence NGRMRVKAIF…PFSYTRVLDN (64 aa). The interval 450 to 471 is disordered; that stretch reads QGKSSSTGNLLDKEDLALPPPD.

Homodimer. Interacts with CDC42 and RAC1 that have been activated by GTP binding. Interacts with ATN1, ADGRB1, DIAPH1, EPS8, SHANK1, SHANK2, SHANK3, TIAM1, WASF1 and WASF2. Interacts with ENAH after recruitment of CDC42. Post-translationally, phosphorylated on tyrosine residues by INSR in response to insulin treatment.

The protein localises to the cytoplasm. The protein resides in the membrane. Its subcellular location is the cell projection. It localises to the filopodium. It is found in the ruffle. The protein localises to the cytoskeleton. Its function is as follows. Adapter protein that links membrane-bound small G-proteins to cytoplasmic effector proteins. Necessary for CDC42-mediated reorganization of the actin cytoskeleton and for RAC1-mediated membrane ruffling. Involved in the regulation of the actin cytoskeleton by WASF family members and the Arp2/3 complex. Plays a role in neurite growth. Acts syngeristically with ENAH to promote filipodia formation. Plays a role in the reorganization of the actin cytoskeleton in response to bacterial infection. Participates in actin bundling when associated with EPS8, promoting filopodial protrusions. The sequence is that of BAR/IMD domain-containing adapter protein 2 (BAIAP2) from Bos taurus (Bovine).